The chain runs to 272 residues: MDSPSPNSDPLTIGGRQFNSRLFTGTGKYPSMTSMQQSIERSGCDMVTVAVRRVQTVAAGHEGLMEAIDWQRIWMLPNTAGCTNAEEAVRVARLGRELAKLAGQEDNTFVKLEVIPDARHLLPDPIGTLNAAEQLVKEGFTVLPYINADPLLAKRLEEVGCATVMPLGSPIGSGQGLNNAANIGLIIENAGVPVVVDAGIGVPSEAAQALEMGADAVLVNSAIALAGDPAAMASAMSQAVMAGRTAHLSGRLPRRDQASASSPTTGLVQSPQ.

Lysine 111 serves as the catalytic Schiff-base intermediate with DXP. Residues glycine 172, 198–199 (AG), and 220–221 (NS) each bind 1-deoxy-D-xylulose 5-phosphate. Residues 249–272 (SGRLPRRDQASASSPTTGLVQSPQ) form a disordered region. Residues 258 to 272 (ASASSPTTGLVQSPQ) show a composition bias toward polar residues.

Belongs to the ThiG family. As to quaternary structure, homotetramer. Forms heterodimers with either ThiH or ThiS.

It localises to the cytoplasm. It carries out the reaction [ThiS sulfur-carrier protein]-C-terminal-Gly-aminoethanethioate + 2-iminoacetate + 1-deoxy-D-xylulose 5-phosphate = [ThiS sulfur-carrier protein]-C-terminal Gly-Gly + 2-[(2R,5Z)-2-carboxy-4-methylthiazol-5(2H)-ylidene]ethyl phosphate + 2 H2O + H(+). It functions in the pathway cofactor biosynthesis; thiamine diphosphate biosynthesis. In terms of biological role, catalyzes the rearrangement of 1-deoxy-D-xylulose 5-phosphate (DXP) to produce the thiazole phosphate moiety of thiamine. Sulfur is provided by the thiocarboxylate moiety of the carrier protein ThiS. In vitro, sulfur can be provided by H(2)S. The chain is Thiazole synthase from Synechococcus sp. (strain CC9605).